Reading from the N-terminus, the 338-residue chain is Ornithine carbamoyltransferase (338 aa).

Carbamoyl phosphate contacts are provided by residues Arg116 and 143 to 146; that span reads HPCQ. Residues Asn174, Asp235, and 239-240 each bind L-ornithine; that span reads SM. Cys275 and Arg303 together coordinate carbamoyl phosphate.

The protein belongs to the aspartate/ornithine carbamoyltransferase superfamily. OTCase family.

It is found in the cytoplasm. The catalysed reaction is carbamoyl phosphate + L-ornithine = L-citrulline + phosphate + H(+). It functions in the pathway amino-acid biosynthesis; L-arginine biosynthesis; L-arginine from L-ornithine and carbamoyl phosphate: step 1/3. In terms of biological role, reversibly catalyzes the transfer of the carbamoyl group from carbamoyl phosphate (CP) to the N(epsilon) atom of ornithine (ORN) to produce L-citrulline. The chain is Ornithine carbamoyltransferase from Chlorobaculum tepidum (strain ATCC 49652 / DSM 12025 / NBRC 103806 / TLS) (Chlorobium tepidum).